Here is a 100-residue protein sequence, read N- to C-terminus: NADH-quinone oxidoreductase subunit K (100 aa).

Helical transmembrane passes span 3-23, 29-49, and 60-80; these read PTSY…VGVI, LVLF…LVTF, and IVVF…LALL.

Belongs to the complex I subunit 4L family. In terms of assembly, NDH-1 is composed of 14 different subunits. Subunits NuoA, H, J, K, L, M, N constitute the membrane sector of the complex.

Its subcellular location is the cell membrane. The enzyme catalyses a quinone + NADH + 5 H(+)(in) = a quinol + NAD(+) + 4 H(+)(out). Functionally, NDH-1 shuttles electrons from NADH, via FMN and iron-sulfur (Fe-S) centers, to quinones in the respiratory chain. The immediate electron acceptor for the enzyme in this species is believed to be ubiquinone. Couples the redox reaction to proton translocation (for every two electrons transferred, four hydrogen ions are translocated across the cytoplasmic membrane), and thus conserves the redox energy in a proton gradient. This Roseiflexus castenholzii (strain DSM 13941 / HLO8) protein is NADH-quinone oxidoreductase subunit K.